Reading from the N-terminus, the 346-residue chain is GTP-binding RHO-like protein (346 aa).

The segment covering 1–10 has biased composition (basic residues); the sequence is MTPNGSRRHS. Residues 1-25 form a disordered region; that stretch reads MTPNGSRRHSAYMGSPRSQHSSTME. Residues 16 to 25 are compositionally biased toward polar residues; sequence PRSQHSSTME. Residue 82-89 participates in GTP binding; the sequence is GDGGCGKT. The Effector region motif lies at 104–112; sequence YVPTVFENY. Residues 130–134 and 188–191 each bind GTP; these read DTAGQ and TKSD. Residues 259 to 294 are disordered; the sequence is LGGSNGGSGNHSRHHSRNYSNVSNNRRGHLKNTSYD. Cys343 carries the cysteine methyl ester modification. Residue Cys343 is the site of S-geranylgeranyl cysteine attachment. A propeptide spans 344 to 346 (removed in mature form); the sequence is VIL.

The protein belongs to the small GTPase superfamily. Rho family.

It is found in the cell membrane. This chain is GTP-binding RHO-like protein (CRL1), found in Candida albicans (strain WO-1) (Yeast).